A 31-amino-acid chain; its full sequence is Cyclotide psybry B (31 aa).

Residues 1–31 (GFNPCGETCWNKPTCHAPGCTCSIANICVRN) constitute a cross-link (cyclopeptide (Gly-Asn)). Intrachain disulfides connect C5-C20, C9-C22, and C15-C28.

This is a cyclic peptide.

Probably participates in a plant defense mechanism. This chain is Cyclotide psybry B, found in Psychotria brachyceras.